A 77-amino-acid polypeptide reads, in one-letter code: Acyl carrier protein (77 aa).

The Carrier domain occupies 2–77 (SSIEERVNKI…SAVDYIKAHS (76 aa)). The residue at position 37 (S37) is an O-(pantetheine 4'-phosphoryl)serine.

This sequence belongs to the acyl carrier protein (ACP) family. Post-translationally, 4'-phosphopantetheine is transferred from CoA to a specific serine of apo-ACP by AcpS. This modification is essential for activity because fatty acids are bound in thioester linkage to the sulfhydryl of the prosthetic group.

The protein resides in the cytoplasm. Its pathway is lipid metabolism; fatty acid biosynthesis. In terms of biological role, carrier of the growing fatty acid chain in fatty acid biosynthesis. The chain is Acyl carrier protein from Alcanivorax borkumensis (strain ATCC 700651 / DSM 11573 / NCIMB 13689 / SK2).